The sequence spans 334 residues: Heat-inducible transcription repressor HrcA (334 aa).

Belongs to the HrcA family.

Its function is as follows. Negative regulator of class I heat shock genes (grpE-dnaK-dnaJ and groELS operons). Prevents heat-shock induction of these operons. This Bordetella bronchiseptica (strain ATCC BAA-588 / NCTC 13252 / RB50) (Alcaligenes bronchisepticus) protein is Heat-inducible transcription repressor HrcA.